Reading from the N-terminus, the 284-residue chain is Aquaporin NIP1-1 (284 aa).

Residues 1 to 12 (MAGGDNNSQTTN) show a composition bias toward polar residues. A disordered region spans residues 1–28 (MAGGDNNSQTTNGGSGHEQRAMEEGRKQ). Residues 17–28 (HEQRAMEEGRKQ) show a composition bias toward basic and acidic residues. 2 consecutive transmembrane segments (helical) span residues 50-70 (IIAE…AVTI) and 78-98 (ITFP…VYAV). The short motif at 107–109 (NPA) is the NPA 1 element. Helical transmembrane passes span 129–149 (AAAQ…MFGG), 166–186 (SLVL…GVAT), and 194–214 (LAGL…GPIS). Residues 219 to 221 (NPA) carry the NPA 2 motif. The chain crosses the membrane as a helical span at residues 236–256 (IWVYIVGPVAGAVAGAWAYNI).

It belongs to the MIP/aquaporin (TC 1.A.8) family. NIP (TC 1.A.8.12) subfamily. As to expression, expressed in leaves and at lower levels in roots and anthers.

The protein localises to the membrane. Aquaporins facilitate the transport of water and small neutral solutes across cell membranes. The sequence is that of Aquaporin NIP1-1 (NIP1-1) from Oryza sativa subsp. japonica (Rice).